We begin with the raw amino-acid sequence, 96 residues long: Small ribosomal subunit protein bS6 (96 aa).

It belongs to the bacterial ribosomal protein bS6 family.

In terms of biological role, binds together with bS18 to 16S ribosomal RNA. This is Small ribosomal subunit protein bS6 from Nocardioides sp. (strain ATCC BAA-499 / JS614).